A 367-amino-acid polypeptide reads, in one-letter code: 3-dehydroquinate synthase (367 aa).

NAD(+) is bound by residues 69-74, 103-107, 127-128, K140, and K149; these read DGEAFK, GVIGD, and TT. 3 residues coordinate Zn(2+): E182, H245, and H262.

It belongs to the sugar phosphate cyclases superfamily. Dehydroquinate synthase family. The cofactor is NAD(+). Co(2+) serves as cofactor. Requires Zn(2+) as cofactor.

The protein localises to the cytoplasm. The catalysed reaction is 7-phospho-2-dehydro-3-deoxy-D-arabino-heptonate = 3-dehydroquinate + phosphate. The protein operates within metabolic intermediate biosynthesis; chorismate biosynthesis; chorismate from D-erythrose 4-phosphate and phosphoenolpyruvate: step 2/7. Its function is as follows. Catalyzes the conversion of 3-deoxy-D-arabino-heptulosonate 7-phosphate (DAHP) to dehydroquinate (DHQ). This is 3-dehydroquinate synthase from Pseudomonas syringae pv. tomato (strain ATCC BAA-871 / DC3000).